We begin with the raw amino-acid sequence, 269 residues long: Extracellular metalloprotease UREG_07765 (269 aa).

Positions 1-18 are cleaved as a signal peptide; it reads MRLSVSLLALAFGSLVAA. N179 is a glycosylation site (N-linked (GlcNAc...) asparagine). H191 lines the Zn(2+) pocket. Residue E192 is part of the active site. Position 195 (H195) interacts with Zn(2+). Residues 207–227 form a disordered region; sequence VSDTPPQRSSTQGCPSSRDSC. Positions 210–225 are enriched in polar residues; that stretch reads TPPQRSSTQGCPSSRD. A disulfide bond links C220 and C246.

The protein belongs to the peptidase M43B family.

The protein resides in the secreted. Its function is as follows. Secreted metalloproteinase that allows assimilation of proteinaceous substrates. In Uncinocarpus reesii (strain UAMH 1704), this protein is Extracellular metalloprotease UREG_07765.